The chain runs to 2224 residues: Myomegalin (2224 aa).

4 coiled-coil regions span residues R41–E97, D162–E205, V236–L318, and C350–Q682. The interval P206 to V236 is disordered. Residues P219–V236 show a composition bias toward polar residues. Residues G703–A751 form a disordered region. Phosphothreonine is present on T705. Over residues S724–S738 the composition is skewed to basic and acidic residues. 3 coiled-coil regions span residues G745–D822, N856–Y886, and A949–S986. Disordered regions lie at residues T1098–L1128, N1141–K1161, and V1270–S1298. The segment covering E1112–Q1124 has biased composition (polar residues). Coiled-coil stretches lie at residues S1159–T1187, D1295–T1331, and G1377–T1401. A compositionally biased stretch (basic and acidic residues) spans K1276 to S1298. An Olduvai domain is found at K1497 to S1588. Disordered stretches follow at residues T1576–Q1637, S1736–G1757, L1805–E1824, and K1962–P2001. A compositionally biased stretch (polar residues) spans E1599–T1609. Residues G1748–G1757 are compositionally biased toward low complexity. The stretch at G1769–R1958 forms a coiled coil. A coiled-coil region spans residues K2148–F2191.

Interacts with PDE4D. Isoform 2 interacts with MAPRE1 and MAPRE3. Isoform 2 forms a pericentrosomal complex with AKAP9, CDK5RAP2 and EB1/MAPRE1; within this complex, may mediate MAPRE1-binding to CDK5RAP2. Interaction with AKAP9 stabilizes both proteins. Isoform 2 interacts (via N-terminus) with CAMSAP2; this interaction is much stronger in the presence of AKAP9. In complex with AKAP9, Isoform 2 recruits CAMSAP2 to the Golgi apparatus. Isoform 2 interacts with unglycosylated LGALS3BP; this interaction may connect the pericentrosomal complex to the gamma-tubulin ring complex (gamma-TuRC) to promote microtubule assembly and acetylation.

Its subcellular location is the cytoplasm. It is found in the cytoskeleton. It localises to the microtubule organizing center. The protein localises to the centrosome. The protein resides in the golgi apparatus. Functionally, functions as an anchor sequestering components of the cAMP-dependent pathway to Golgi and/or centrosomes. Participates in microtubule dynamics, promoting microtubule assembly. Depending upon the cell context, may act at the level of the Golgi apparatus or that of the centrosome. In complex with AKAP9, recruits CAMSAP2 to the Golgi apparatus and tethers non-centrosomal minus-end microtubules to the Golgi, an important step for polarized cell movement. In complex with AKAP9, EB1/MAPRE1 and CDK5RAP2, contributes to microtubules nucleation and extension from the centrosome to the cell periphery, a crucial process for directed cell migration, mitotic spindle orientation and cell-cycle progression. The polypeptide is Myomegalin (Pde4dip) (Mus musculus (Mouse)).